The chain runs to 700 residues: Mitogen-activated protein kinase 9 (700 aa).

In terms of domain architecture, Protein kinase spans 107–398 (YRIQEVIGKG…AEEALTDPYF (292 aa)). ATP-binding positions include 113–121 (IGKGSYGVV) and K136. The Proton acceptor role is filled by D233. Phosphothreonine is present on T269. Positions 269 to 271 (TDY) match the TXY motif. The residue at position 271 (Y271) is a Phosphotyrosine. A disordered region spans residues 475-523 (EESNGSGSAIPMERKHASLPRSTTVHSTPIPPKEQPLAASLKSSRPVSD).

This sequence belongs to the protein kinase superfamily. CMGC Ser/Thr protein kinase family. MAP kinase subfamily. Dually phosphorylated on Thr-269 and Tyr-271, which activates the enzyme.

The enzyme catalyses L-seryl-[protein] + ATP = O-phospho-L-seryl-[protein] + ADP + H(+). The catalysed reaction is L-threonyl-[protein] + ATP = O-phospho-L-threonyl-[protein] + ADP + H(+). Activated by threonine and tyrosine phosphorylation. This chain is Mitogen-activated protein kinase 9 (MPK9), found in Oryza sativa subsp. japonica (Rice).